A 357-amino-acid chain; its full sequence is Serpentine receptor class epsilon-31 (357 aa).

The next 7 helical transmembrane spans lie at 28–48 (VISIFELLSYILCGYILNLSI), 61–81 (LMFLTVPLFAIWYELIIGKFI), 121–141 (LLIFGGFLQWHTIYSIVFGIL), 165–185 (IPIFLIIICQVLAIFMTFIVI), 192–212 (IIARLPFIFLCPISFAVWLFV), 253–273 (LVAVVLVYIMVCFLGIVSLTF), and 283–303 (FVENFLFFHPIPICLTAMFSI).

The protein belongs to the nematode receptor-like protein sre family.

The protein localises to the membrane. This chain is Serpentine receptor class epsilon-31 (sre-31), found in Caenorhabditis elegans.